Consider the following 439-residue polypeptide: Diaminopimelate decarboxylase (439 aa).

Position 66 is an N6-(pyridoxal phosphate)lysine (Lys-66). Pyridoxal 5'-phosphate-binding positions include Gly-248 and 290–293 (EPGR). Residues Arg-293, Arg-330, and Tyr-334 each coordinate substrate. The Proton donor role is filled by Cys-361. The substrate site is built by Glu-362 and Tyr-390. Tyr-390 contacts pyridoxal 5'-phosphate.

This sequence belongs to the Orn/Lys/Arg decarboxylase class-II family. LysA subfamily. As to quaternary structure, homodimer. Requires pyridoxal 5'-phosphate as cofactor.

The catalysed reaction is meso-2,6-diaminopimelate + H(+) = L-lysine + CO2. The protein operates within amino-acid biosynthesis; L-lysine biosynthesis via DAP pathway; L-lysine from DL-2,6-diaminopimelate: step 1/1. Functionally, specifically catalyzes the decarboxylation of meso-diaminopimelate (meso-DAP) to L-lysine. The polypeptide is Diaminopimelate decarboxylase (Halalkalibacterium halodurans (strain ATCC BAA-125 / DSM 18197 / FERM 7344 / JCM 9153 / C-125) (Bacillus halodurans)).